The following is a 163-amino-acid chain: Ribosome maturation factor RimP (163 aa).

Belongs to the RimP family.

It is found in the cytoplasm. Required for maturation of 30S ribosomal subunits. The sequence is that of Ribosome maturation factor RimP from Streptococcus thermophilus (strain CNRZ 1066).